A 140-amino-acid polypeptide reads, in one-letter code: Lymphocyte antigen 6H (140 aa).

The signal sequence occupies residues 1 to 25 (MLPAAMKGLGLVLLAALLCSSPAHG). Positions 26–91 (LWCQDCTLTT…RHFFSDYLMG (66 aa)) constitute a UPAR/Ly6 domain. Cystine bridges form between Cys28–Cys52, Cys31–Cys40, Cys45–Cys73, Cys77–Cys104, and Cys105–Cys110. N-linked (GlcNAc...) asparagine glycosylation is present at Asn36.

It is found in the cell membrane. This is Lymphocyte antigen 6H (LY6H) from Bos taurus (Bovine).